Reading from the N-terminus, the 811-residue chain is Receptor-like protein 52 (811 aa).

The N-terminal stretch at 1 to 22 is a signal peptide; the sequence is MTFLPLLFIFFFLTSIPFPAFS. Over 23–770 the chain is Extracellular; it reads QYNDRSTLLN…EDEEEVMNWT (748 aa). N-linked (GlcNAc...) asparagine glycosylation is found at Asn-47, Asn-64, Asn-74, Asn-93, Asn-109, and Asn-124. LRR repeat units follow at residues 62-86, 87-110, 112-134, 135-159, 161-183, and 184-208; these read AGNV…ICNF, PNLK…LYNC, KLQY…INRL, APKL…IGRI, KLKV…IGDL, and SELE…EFGK. One copy of the LRR 7; degenerate repeat lies at 211–233; that stretch reads KLKYMWLEEMNLIGEISAVVFEN. Asn-233, Asn-246, Asn-260, Asn-295, and Asn-304 each carry an N-linked (GlcNAc...) asparagine glycan. LRR repeat units follow at residues 234–258, 260–281, 282–305, 307–329, 330–354, 356–377, 379–401, and 403–427; these read MTDL…LFGL, NLTE…SISA, KNLV…IGNL, NLEL…IGKL, PELK…GFIS, LERF…LCHG, KLQS…LGDC, and TLSS…TRSN. Asn-389, Asn-422, Asn-429, Asn-455, Asn-464, and Asn-485 each carry an N-linked (GlcNAc...) asparagine glycan. LRR repeat units follow at residues 441 to 465, 466 to 489, 491 to 511, 512 to 537, 539 to 557, 558 to 581, 625 to 649, 650 to 673, 674 to 697, and 699 to 722; these read LHSL…IANL, STLE…ISTS, KSID…LVRI, SSLE…SMQQ, QVLV…QNGF, SKLR…FFVN, LNTF…VGLL, KELH…MGNL, IELE…LGKL, and YLAY…QFQT. A glycan (N-linked (GlcNAc...) asparagine) is linked at Asn-525. N-linked (GlcNAc...) asparagine glycosylation is found at Asn-571 and Asn-581. Asn-656 is a glycosylation site (N-linked (GlcNAc...) asparagine). Residue Asn-704 is glycosylated (N-linked (GlcNAc...) asparagine). The chain crosses the membrane as a helical span at residues 771–791; that stretch reads AAAIGSIPGISIGLTMGYILV. Over 792–811 the chain is Cytoplasmic; that stretch reads SYKPEWLMNSGRNKRRIKPI.

The protein belongs to the RLP family.

The protein localises to the cell membrane. Its function is as follows. Required for defense against powdery mildew pathogen. This chain is Receptor-like protein 52, found in Arabidopsis thaliana (Mouse-ear cress).